The chain runs to 335 residues: Dolichyl-diphosphooligosaccharide--protein glycosyltransferase subunit MAGT1 (335 aa).

The signal sequence occupies residues M1–A29. The Extracellular segment spans residues Q30–P184. In terms of domain architecture, Thioredoxin spans W47–D175. N-linked (GlcNAc...) asparagine glycosylation is present at N71. A disulfide bond links C87 and C90. A helical membrane pass occupies residues N185–L205. The Cytoplasmic segment spans residues R206–N209. A helical membrane pass occupies residues M210–M230. Over T231 to H270 the chain is Extracellular. A helical transmembrane segment spans residues I271–T291. Residues S292–R300 are Cytoplasmic-facing. A helical transmembrane segment spans residues M301–F321. Topologically, residues R322–S335 are extracellular.

The protein belongs to the OST3/OST6 family. In terms of assembly, accessory component of the STT3B-containing form of the oligosaccharyltransferase (OST) complex. OST exists in two different complex forms which contain common core subunits RPN1, RPN2, OST48, OST4, DAD1 and TMEM258, either STT3A or STT3B as catalytic subunits, and form-specific accessory subunits. OST can form stable complexes with the Sec61 complex or with both the Sec61 and TRAP complexes. The association of TUSC3 or MAGT1 with the STT3B-containing complex seems to be mutually exclusvice. Expressed at high levels in kidney, colon, heart and liver. Expressed at lower levels in intestine, spleen, brain and lung.

It is found in the cell membrane. The protein resides in the endoplasmic reticulum. It localises to the endoplasmic reticulum membrane. It participates in protein modification; protein glycosylation. In terms of biological role, accessory component of the STT3B-containing form of the N-oligosaccharyl transferase (OST) complex which catalyzes the transfer of a high mannose oligosaccharide from a lipid-linked oligosaccharide donor to an asparagine residue within an Asn-X-Ser/Thr consensus motif in nascent polypeptide chains. Involved in N-glycosylation of STT3B-dependent substrates. Specifically required for the glycosylation of a subset of acceptor sites that are near cysteine residues; in this function seems to act redundantly with TUSC3. In its oxidized form proposed to form transient mixed disulfides with a glycoprotein substrate to facilitate access of STT3B to the unmodified acceptor site. Also has oxidoreductase-independent functions in the STT3B-containing OST complex possibly involving substrate recognition. Could indirectly play a role in Mg(2+) transport in epithelial cells. The protein is Dolichyl-diphosphooligosaccharide--protein glycosyltransferase subunit MAGT1 of Mus musculus (Mouse).